Here is a 139-residue protein sequence, read N- to C-terminus: Large ribosomal subunit protein uL24 (139 aa).

A disordered region spans residues methionine 1–glutamate 25.

This sequence belongs to the universal ribosomal protein uL24 family.

In Dictyostelium discoideum (Social amoeba), this protein is Large ribosomal subunit protein uL24 (rpl26).